Consider the following 252-residue polypeptide: Flap endonuclease Xni (252 aa).

Asp105 is a Mg(2+) binding site. In terms of domain architecture, 5'-3' exonuclease spans 162 to 250; the sequence is ERTQFIDYLA…LNANLSQFRL (89 aa). K(+) contacts are provided by Leu172, Ala173, Pro181, Val183, and Ile186. Positions 185–190 are interaction with DNA; the sequence is GIGPKS.

It belongs to the Xni family. It depends on Mg(2+) as a cofactor. The cofactor is K(+).

In terms of biological role, has flap endonuclease activity. During DNA replication, flap endonucleases cleave the 5'-overhanging flap structure that is generated by displacement synthesis when DNA polymerase encounters the 5'-end of a downstream Okazaki fragment. This Shewanella woodyi (strain ATCC 51908 / MS32) protein is Flap endonuclease Xni.